We begin with the raw amino-acid sequence, 427 residues long: Adenylosuccinate synthetase (427 aa).

Residues 12–18 and 40–42 each bind GTP; these read GDEGKGK and GHT. The active-site Proton acceptor is the Asp-13. 2 residues coordinate Mg(2+): Asp-13 and Gly-40. IMP is bound by residues 13-16, 38-41, Thr-126, Arg-140, Gln-221, Thr-236, and Arg-299; these read DEGK and NAGH. His-41 functions as the Proton donor in the catalytic mechanism. 295-301 contributes to the substrate binding site; the sequence is STTNRPR. GTP is bound by residues Arg-301, 327–329, and 409–411; these read KLD and SLG.

It belongs to the adenylosuccinate synthetase family. In terms of assembly, homodimer. Requires Mg(2+) as cofactor.

The protein resides in the cytoplasm. It catalyses the reaction IMP + L-aspartate + GTP = N(6)-(1,2-dicarboxyethyl)-AMP + GDP + phosphate + 2 H(+). Its pathway is purine metabolism; AMP biosynthesis via de novo pathway; AMP from IMP: step 1/2. In terms of biological role, plays an important role in the de novo pathway of purine nucleotide biosynthesis. Catalyzes the first committed step in the biosynthesis of AMP from IMP. This chain is Adenylosuccinate synthetase, found in Borrelia turicatae (strain 91E135).